The chain runs to 361 residues: MASAVVSMVPTTASRFALLQVDSSSDSDSEKARGAHSSGKAHSGSAARGKNKGNEKKKEKRRKKKEQQQSEANELRNLAFKKIPPKASPGVAVQEHLTHTVPKVAQEEDWQQWQQRDVQLTSDMYEADLEKALILSKLEFEESKDNGNGDNGVPQSKKVNKKDKRKNNQGKDKPLTVPLKDFQLEDKHAKKQEELKSPPLPQDSGFFNKLEEDVTKIILKEKRKEHSTDVTEQFATPEYSMEPVLKDGRTEVLKQEIEKKEVELKQMKSIISQWEAKYREVKARNSQLLKMLQEGEMKDKAEILLQVDELLSIKNELTLQVTTLHAALEQERSKVKILQAEQVKYQGGKKSKRTAELEHGR.

Disordered regions lie at residues 22–111 and 140–183; these read DSSS…EDWQ and FEES…KDFQ. The span at 35–48 shows a compositional bias: low complexity; it reads AHSSGKAHSGSAAR. Residues 51–79 adopt a coiled-coil conformation; it reads NKGNEKKKEKRRKKKEQQQSEANELRNLA. A compositionally biased stretch (basic residues) spans 158-168; sequence KVNKKDKRKNN. 2 coiled-coil regions span residues 246–296 and 326–346; these read KDGR…QEGE and AALEQERSKVKILQAEQVKYQ.

This sequence belongs to the GKAP1 family.

It is found in the golgi apparatus. May play a role in the regulation of insulin-dependent IRS1 tyrosine phosphorylation in adipocytes. This is G kinase-anchoring protein 1-A (gkap1-a) from Xenopus laevis (African clawed frog).